We begin with the raw amino-acid sequence, 576 residues long: DM7 family protein GD16138 (576 aa).

The segment at 454-481 is disordered; it reads FPELEPDSEPEPEPEPQTEDEGEDEGDK. Residues 457-478 are compositionally biased toward acidic residues; that stretch reads LEPDSEPEPEPEPQTEDEGEDE.

The protein belongs to the DM7 family.

This Drosophila simulans (Fruit fly) protein is DM7 family protein GD16138.